The following is a 61-amino-acid chain: Bactericidin B-5P (61 aa).

Residues 1–22 (MNFSRVLFFVFACLSAFAMASA) form the signal peptide. Residues 23–24 (AP) constitute a propeptide, removed by a dipeptidylpeptidase. Position 60 is a glycine amide (Gly60).

Belongs to the cecropin family.

Its subcellular location is the secreted. In terms of biological role, cecropins have lytic and antibacterial activity against several Gram-positive and Gram-negative bacteria. The protein is Bactericidin B-5P of Manduca sexta (Tobacco hawkmoth).